The primary structure comprises 479 residues: Anaerobic nitric oxide reductase flavorubredoxin (479 aa).

The segment at 30 to 210 (LRGSSYNSYL…PFSRLVTPKI (181 aa)) is zinc metallo-hydrolase. Fe cation contacts are provided by histidine 79, glutamate 81, aspartate 83, histidine 147, aspartate 166, and histidine 227. A Flavodoxin-like domain is found at 254–393 (ITIVYDTMSN…LCREHGREIA (140 aa)). Residues 260–264 (TMSNN) and 342–369 (AFGS…EMSL) contribute to the FMN site. A Rubredoxin-like domain is found at 423 to 474 (GPRMQCSVCQWIYDPAKGEPMQDVAPGTPWSEVPDNFLCPECSLGKDVFDEL). The Fe cation site is built by cysteine 428, cysteine 431, cysteine 461, and cysteine 464.

This sequence in the N-terminal section; belongs to the zinc metallo-hydrolase group 3 family. Homotetramer. Requires Fe cation as cofactor. The cofactor is FMN.

Its subcellular location is the cytoplasm. Its pathway is nitrogen metabolism; nitric oxide reduction. Its function is as follows. Anaerobic nitric oxide reductase; uses NADH to detoxify nitric oxide (NO), protecting several 4Fe-4S NO-sensitive enzymes. Has at least 2 reductase partners, only one of which (NorW, flavorubredoxin reductase) has been identified. NO probably binds to the di-iron center; electrons enter from the NorW at rubredoxin and are transferred sequentially to the FMN center and the di-iron center. Also able to function as an aerobic oxygen reductase. This chain is Anaerobic nitric oxide reductase flavorubredoxin, found in Escherichia coli (strain UTI89 / UPEC).